The sequence spans 127 residues: Aspartate 1-decarboxylase (127 aa).

The Schiff-base intermediate with substrate; via pyruvic acid role is filled by Ser-25. At Ser-25 the chain carries Pyruvic acid (Ser). A substrate-binding site is contributed by Thr-57. Tyr-58 functions as the Proton donor in the catalytic mechanism. 73–75 (GAA) lines the substrate pocket.

Belongs to the PanD family. As to quaternary structure, heterooctamer of four alpha and four beta subunits. The cofactor is pyruvate. Post-translationally, is synthesized initially as an inactive proenzyme, which is activated by self-cleavage at a specific serine bond to produce a beta-subunit with a hydroxyl group at its C-terminus and an alpha-subunit with a pyruvoyl group at its N-terminus.

It is found in the cytoplasm. It carries out the reaction L-aspartate + H(+) = beta-alanine + CO2. It participates in cofactor biosynthesis; (R)-pantothenate biosynthesis; beta-alanine from L-aspartate: step 1/1. Catalyzes the pyruvoyl-dependent decarboxylation of aspartate to produce beta-alanine. This chain is Aspartate 1-decarboxylase, found in Bacillus cereus (strain G9842).